The chain runs to 141 residues: Nucleoside diphosphate kinase (141 aa).

Residues Lys11, Phe59, Arg87, Thr93, Arg104, and Asn114 each coordinate ATP. Catalysis depends on His117, which acts as the Pros-phosphohistidine intermediate.

It belongs to the NDK family. As to quaternary structure, homotetramer. Mg(2+) serves as cofactor.

The protein resides in the cytoplasm. The catalysed reaction is a 2'-deoxyribonucleoside 5'-diphosphate + ATP = a 2'-deoxyribonucleoside 5'-triphosphate + ADP. It catalyses the reaction a ribonucleoside 5'-diphosphate + ATP = a ribonucleoside 5'-triphosphate + ADP. Major role in the synthesis of nucleoside triphosphates other than ATP. The ATP gamma phosphate is transferred to the NDP beta phosphate via a ping-pong mechanism, using a phosphorylated active-site intermediate. This is Nucleoside diphosphate kinase from Cupriavidus metallidurans (strain ATCC 43123 / DSM 2839 / NBRC 102507 / CH34) (Ralstonia metallidurans).